Here is a 376-residue protein sequence, read N- to C-terminus: Chaperone protein DnaJ (376 aa).

Residues 4–69 form the J domain; it reads DFYETLGVQK…QKRAAYDRFG (66 aa). The CR-type zinc finger occupies 133 to 211; sequence GKTAQIRVPA…CAGQGRVTEE (79 aa). Residues Cys-146, Cys-149, Cys-163, Cys-166, Cys-185, Cys-188, Cys-199, and Cys-202 each contribute to the Zn(2+) site. CXXCXGXG motif repeat units lie at residues 146 to 153, 163 to 170, 185 to 192, and 199 to 206; these read CTECSGSG, CSMCHGHG, CPQCQGRG, and CPKCAGQG.

The protein belongs to the DnaJ family. As to quaternary structure, homodimer. The cofactor is Zn(2+).

Its subcellular location is the cytoplasm. Functionally, participates actively in the response to hyperosmotic and heat shock by preventing the aggregation of stress-denatured proteins and by disaggregating proteins, also in an autonomous, DnaK-independent fashion. Unfolded proteins bind initially to DnaJ; upon interaction with the DnaJ-bound protein, DnaK hydrolyzes its bound ATP, resulting in the formation of a stable complex. GrpE releases ADP from DnaK; ATP binding to DnaK triggers the release of the substrate protein, thus completing the reaction cycle. Several rounds of ATP-dependent interactions between DnaJ, DnaK and GrpE are required for fully efficient folding. Also involved, together with DnaK and GrpE, in the DNA replication of plasmids through activation of initiation proteins. The sequence is that of Chaperone protein DnaJ from Mesorhizobium japonicum (strain LMG 29417 / CECT 9101 / MAFF 303099) (Mesorhizobium loti (strain MAFF 303099)).